The chain runs to 1019 residues: UPF0182 protein Krad_1193 (1019 aa).

7 helical membrane-spanning segments follow: residues 19-39 (GAAL…VVGA), 61-81 (LWLQ…AVAV), 115-135 (RLVV…VAMS), 169-189 (WLAF…IAGL), 213-233 (VHLA…YWLD), 264-284 (AILA…AVGT), and 291-311 (IGTG…PWAV). Disordered stretches follow at residues 897–934 (GNSG…ATGD) and 977–1019 (DAAS…TPTP). Over residues 977-1005 (DAASAAEARLERSGTSGPTSSSSPSASSA) the composition is skewed to low complexity. Residues 1006–1019 (PPVPGETPAATPTP) show a composition bias toward pro residues.

The protein belongs to the UPF0182 family.

It is found in the cell membrane. This chain is UPF0182 protein Krad_1193, found in Kineococcus radiotolerans (strain ATCC BAA-149 / DSM 14245 / SRS30216).